Reading from the N-terminus, the 435-residue chain is Serine--tRNA ligase (435 aa).

242 to 244 (TAE) is a binding site for L-serine. 273 to 275 (RSE) contacts ATP. E296 is a binding site for L-serine. 360-363 (EISS) provides a ligand contact to ATP. Residue S396 coordinates L-serine.

The protein belongs to the class-II aminoacyl-tRNA synthetase family. Type-1 seryl-tRNA synthetase subfamily. As to quaternary structure, homodimer. The tRNA molecule binds across the dimer.

It is found in the cytoplasm. It carries out the reaction tRNA(Ser) + L-serine + ATP = L-seryl-tRNA(Ser) + AMP + diphosphate + H(+). It catalyses the reaction tRNA(Sec) + L-serine + ATP = L-seryl-tRNA(Sec) + AMP + diphosphate + H(+). The protein operates within aminoacyl-tRNA biosynthesis; selenocysteinyl-tRNA(Sec) biosynthesis; L-seryl-tRNA(Sec) from L-serine and tRNA(Sec): step 1/1. Functionally, catalyzes the attachment of serine to tRNA(Ser). Is also able to aminoacylate tRNA(Sec) with serine, to form the misacylated tRNA L-seryl-tRNA(Sec), which will be further converted into selenocysteinyl-tRNA(Sec). This Aliivibrio salmonicida (strain LFI1238) (Vibrio salmonicida (strain LFI1238)) protein is Serine--tRNA ligase.